The primary structure comprises 235 residues: N,O-diacetylmuramidase (235 aa).

An N-terminal signal peptide occupies residues 1–17 (MKLSLLTVAAAAGAAVA). The region spanning 29-235 (SVQGFDISGY…DQLQRFAKGG (207 aa)) is the Ch-type lysozyme domain. Residues Asp34, Asp122, and Glu124 contribute to the active site. Cys132 and Cys171 form a disulfide bridge.

This sequence belongs to the glycosyl hydrolase 25 family.

The protein resides in the secreted. It catalyses the reaction Hydrolysis of (1-&gt;4)-beta-linkages between N-acetylmuramic acid and N-acetyl-D-glucosamine residues in a peptidoglycan and between N-acetyl-D-glucosamine residues in chitodextrins.. Functionally, this enzyme has both lysozyme (acetylmuramidase) and diacetylmuramidase activities. The chain is N,O-diacetylmuramidase from Arthroderma benhamiae (strain ATCC MYA-4681 / CBS 112371) (Trichophyton mentagrophytes).